Consider the following 56-residue polypeptide: Mitoregulin (56 aa).

Over 2 to 9 (ADVSERTL) the chain is Mitochondrial matrix. The chain crosses the membrane as a helical span at residues 10–27 (QVSVLVAFASGVVLGWQA). At 28-56 (NRLRRRYLDWRKRRLQDKLATTQKKLDLA) the chain is on the mitochondrial intermembrane side.

Belongs to the mitoregulin family. As to quaternary structure, interacts with mitochondrial trifunctional enzyme, a heterotetrameric complex composed of 2 HADHA subunits and 2 HADHB subunits. Interacts with cytochrome b5 reductase CYB5R3; the interaction is required to maintain cellular lipid composition and leads to stimulation of mitochondrial respiratory complex I activity. Interacts with ATP synthase subunit ATP5F1B/ATP5B. Enriched in heart and skeletal muscle (at protein level). Also enriched in adipose tissue with lower levels detected in liver, pancreas and brain (at protein level). Higher levels in differentiated myotubes than in satellite cells.

The protein localises to the mitochondrion inner membrane. Its function is as follows. Positively regulates mitochondrial complex assembly and/or stability. Increases mitochondrial membrane potential while decreasing mitochondrial reactive oxygen species. Increases mitochondrial respiration rate. Increased mitochondrial respiratory activity promotes myogenic differentiation which facilitates muscle growth and regeneration. Increases mitochondrial calcium retention capacity. Plays a role in maintenance of cellular lipid composition through its interaction with cytochrome b5 reductase CYB5R3 which is required for mitochondrial respiratory complex I activity. Interacts with the mitochondrial trifunctional enzyme complex (MTE) and enhances fatty acid beta-oxidation. Not required for MTE formation or stability. Modulates triglyceride clearance in adipocytes through its role in regulating fatty acid beta-oxidation and lipolysis. In Mus musculus (Mouse), this protein is Mitoregulin.